A 1204-amino-acid polypeptide reads, in one-letter code: ATP-dependent helicase/nuclease subunit A (1204 aa).

The region spanning 2 to 469 is the UvrD-like helicase ATP-binding domain; that stretch reads TNFTKEQDQA…IILADNFRST (468 aa). ATP is bound at residue 23–30; it reads ASAGSGKT. One can recognise a UvrD-like helicase C-terminal domain in the interval 497–784; that stretch reads GQLQFGASYY…KLMTIHASKG (288 aa).

This sequence belongs to the helicase family. AddA subfamily. Heterodimer of AddA and AddB/RexB. Mg(2+) is required as a cofactor.

The catalysed reaction is Couples ATP hydrolysis with the unwinding of duplex DNA by translocating in the 3'-5' direction.. It carries out the reaction ATP + H2O = ADP + phosphate + H(+). Functionally, the heterodimer acts as both an ATP-dependent DNA helicase and an ATP-dependent, dual-direction single-stranded exonuclease. Recognizes the chi site generating a DNA molecule suitable for the initiation of homologous recombination. The AddA nuclease domain is required for chi fragment generation; this subunit has the helicase and 3' -&gt; 5' nuclease activities. The chain is ATP-dependent helicase/nuclease subunit A from Lactobacillus gasseri (strain ATCC 33323 / DSM 20243 / BCRC 14619 / CIP 102991 / JCM 1131 / KCTC 3163 / NCIMB 11718 / NCTC 13722 / AM63).